Here is a 37-residue protein sequence, read N- to C-terminus: Large ribosomal subunit protein bL36 (37 aa).

This sequence belongs to the bacterial ribosomal protein bL36 family.

The sequence is that of Large ribosomal subunit protein bL36 from Alkaliphilus oremlandii (strain OhILAs) (Clostridium oremlandii (strain OhILAs)).